A 150-amino-acid polypeptide reads, in one-letter code: D-aminoacyl-tRNA deacylase (150 aa).

The short motif at 138–139 (GP) is the Gly-cisPro motif, important for rejection of L-amino acids element.

The protein belongs to the DTD family. Homodimer.

It localises to the cytoplasm. It carries out the reaction glycyl-tRNA(Ala) + H2O = tRNA(Ala) + glycine + H(+). The catalysed reaction is a D-aminoacyl-tRNA + H2O = a tRNA + a D-alpha-amino acid + H(+). Functionally, an aminoacyl-tRNA editing enzyme that deacylates mischarged D-aminoacyl-tRNAs. Also deacylates mischarged glycyl-tRNA(Ala), protecting cells against glycine mischarging by AlaRS. Acts via tRNA-based rather than protein-based catalysis; rejects L-amino acids rather than detecting D-amino acids in the active site. By recycling D-aminoacyl-tRNA to D-amino acids and free tRNA molecules, this enzyme counteracts the toxicity associated with the formation of D-aminoacyl-tRNA entities in vivo and helps enforce protein L-homochirality. This chain is D-aminoacyl-tRNA deacylase, found in Porphyromonas gingivalis (strain ATCC 33277 / DSM 20709 / CIP 103683 / JCM 12257 / NCTC 11834 / 2561).